The following is an 86-amino-acid chain: Cardiotoxin homolog TA-ctx-like (86 aa).

Positions 1-21 are cleaved as a signal peptide; sequence MKTLLLTLVVLTIACLDLGYT. Cystine bridges form between C24-C45, C38-C62, C66-C78, and C79-C84.

It belongs to the three-finger toxin family. Short-chain subfamily. Orphan group IX sub-subfamily. In terms of tissue distribution, expressed by the venom gland.

The protein resides in the secreted. This chain is Cardiotoxin homolog TA-ctx-like, found in Bungarus multicinctus (Many-banded krait).